A 164-amino-acid chain; its full sequence is Lipoprotein signal peptidase (164 aa).

4 helical membrane-spanning segments follow: residues 6 to 26 (LGIL…LWLL), 39 to 59 (VTSF…GWFA), 65 to 85 (GQIL…IWMA), and 88 to 108 (TTKL…GNAI). Catalysis depends on residues Asp-118 and Asp-140. A helical membrane pass occupies residues 141–161 (VAIVVGVVALLYDSLIGAPAV).

The protein belongs to the peptidase A8 family.

The protein localises to the cell inner membrane. It carries out the reaction Release of signal peptides from bacterial membrane prolipoproteins. Hydrolyzes -Xaa-Yaa-Zaa-|-(S,diacylglyceryl)Cys-, in which Xaa is hydrophobic (preferably Leu), and Yaa (Ala or Ser) and Zaa (Gly or Ala) have small, neutral side chains.. It participates in protein modification; lipoprotein biosynthesis (signal peptide cleavage). Its function is as follows. This protein specifically catalyzes the removal of signal peptides from prolipoproteins. The protein is Lipoprotein signal peptidase of Rhodopseudomonas palustris (strain TIE-1).